Consider the following 256-residue polypeptide: Tryptophan synthase alpha chain (256 aa).

Active-site proton acceptor residues include E44 and D55.

It belongs to the TrpA family. As to quaternary structure, tetramer of two alpha and two beta chains.

It carries out the reaction (1S,2R)-1-C-(indol-3-yl)glycerol 3-phosphate + L-serine = D-glyceraldehyde 3-phosphate + L-tryptophan + H2O. Its pathway is amino-acid biosynthesis; L-tryptophan biosynthesis; L-tryptophan from chorismate: step 5/5. In terms of biological role, the alpha subunit is responsible for the aldol cleavage of indoleglycerol phosphate to indole and glyceraldehyde 3-phosphate. In Coxiella burnetii (strain CbuK_Q154) (Coxiella burnetii (strain Q154)), this protein is Tryptophan synthase alpha chain.